Here is a 492-residue protein sequence, read N- to C-terminus: MNKSSTKTLIALSMMAVSSGVSAHGYVSETNDGIAGSRAALCKFPTSDTQEKNRDCGAVQWEPQSVEGPEGFPEKGPADGQIAGAGLVQFSELNEQTADRWVKRPITAGAQTFEWTFTANHVTRTWKYYMTKQNWNPNAVLTRDSFDLTPFCELEYNMEKPPLYPNTFSHECIVPEREGYQVILAVWDVGDTAAAFYNVIDVKFDGNGGVVDPTWSQGGQINPTRDLNVGDRVFTRVFDTSGENASLSTELVIENETQGQANNWTHALATKINKEQQNIGAGQLNDKGEFSPQYGSNPVYLKAGSGLKSVEIGYQLETVEPVYHLDIEGLASEYTIGDSATELDLSLYATGDMNVELTVYNHGKEALANTNVTLKDGEAKSVVMALSKSEKGHHMLVSRIKNMDGELIKQDMSDFHLVEEAVTPPPSGDFDFVFPEGVKGYKAGTKVLAEDGNVYQCKEFPYSGYCVQWTETATNFAPGVGSDWSMAWDKVN.

The N-terminal stretch at 1–23 is a signal peptide; it reads MNKSSTKTLIALSMMAVSSGVSA. Residues 24 to 204 form the Chitin-binding type-4 domain; sequence HGYVSETNDG…AFYNVIDVKF (181 aa). One can recognise a Chitin-binding type-3 domain in the interval 443–484; it reads AGTKVLAEDGNVYQCKEFPYSGYCVQWTETATNFAPGVGSDW.

The protein belongs to the GbpA family.

The protein resides in the secreted. In terms of biological role, probably interacts with GlcNAc residues. May promote attachment to both epithelial cell surfaces and chitin. This Aliivibrio fischeri (strain ATCC 700601 / ES114) (Vibrio fischeri) protein is GlcNAc-binding protein A.